We begin with the raw amino-acid sequence, 319 residues long: Histidinol-phosphate aminotransferase 1 (319 aa).

Lys182 carries the N6-(pyridoxal phosphate)lysine modification.

Belongs to the class-II pyridoxal-phosphate-dependent aminotransferase family. Histidinol-phosphate aminotransferase subfamily. Requires pyridoxal 5'-phosphate as cofactor.

It carries out the reaction L-histidinol phosphate + 2-oxoglutarate = 3-(imidazol-4-yl)-2-oxopropyl phosphate + L-glutamate. The protein operates within amino-acid biosynthesis; L-histidine biosynthesis; L-histidine from 5-phospho-alpha-D-ribose 1-diphosphate: step 7/9. The chain is Histidinol-phosphate aminotransferase 1 (hisC1) from Archaeoglobus fulgidus (strain ATCC 49558 / DSM 4304 / JCM 9628 / NBRC 100126 / VC-16).